Here is a 687-residue protein sequence, read N- to C-terminus: Adhesion G-protein coupled receptor G1 (687 aa).

The signal sequence occupies residues 1–25 (MTAQSLLQMTLFLLSLLFLVQGAHG). 26-33 (RGHREDFR) serves as a coordination point for heparin. Residues 26 to 402 (RGHREDFRFC…VEVDAVHKHY (377 aa)) are Extracellular-facing. 2 cysteine pairs are disulfide-bonded: Cys-35–Cys-91 and Cys-121–Cys-177. Residues Asn-39, Asn-148, and Asn-171 are each glycosylated (N-linked (GlcNAc...) asparagine). 190-200 (LKHPQKASRRP) serves as a coordination point for heparin. The region spanning 224–395 (DTVSFEEDRI…AVLMVSSVEV (172 aa)) is the GAIN-B domain. 4 N-linked (GlcNAc...) asparagine glycosylation sites follow: Asn-234, Asn-303, Asn-324, and Asn-341. Intrachain disulfides connect Cys-346–Cys-377 and Cys-366–Cys-379. The GPS stretch occupies residues 346 to 395 (CVFWVEDPTLSSPGHWSSAGCETVRRETQTSCFCNHLTYFAVLMVSSVEV). The segment at 384-397 (YFAVLMVSSVEVDA) is stachel. The helical transmembrane segment at 403–423 (LSLLSYVGCVISALACVVTIA) threads the bilayer. The Cytoplasmic segment spans residues 424 to 442 (AYLCSRRKPRDYTIKVHMN). The chain crosses the membrane as a helical span at residues 443-463 (LLLAVFLLDMSFLLSEPVALT). At 464–470 (GSEAGCR) the chain is on the extracellular side. Residues 471-491 (AGAIFLHFSLLACLSWMGLEG) form a helical membrane-spanning segment. The Cytoplasmic segment spans residues 492 to 512 (YNLYRLVVEVFGTYVPGYLLK). Residues 513–533 (LSAMGWGFPIFLVTLVALVDV) form a helical membrane-spanning segment. The Extracellular portion of the chain corresponds to 534-570 (DNYGPIILAVHRTPESVIYPSMCWIRDSLVSYVTNLG). The helical transmembrane segment at 571-591 (LFSLVFLFNMAMLGTMVVQIL) threads the bilayer. Over 592–603 (RLRPHTQKWSHV) the chain is Cytoplasmic. A helical transmembrane segment spans residues 604–624 (LTLLGLSLVLGLPWALIFFSF). At 625 to 630 (ASGTFQ) the chain is on the extracellular side. The helical transmembrane segment at 631–651 (LVVLYLFSIITSFQGFLIFIW) threads the bilayer. Topologically, residues 652–687 (YWSMRLQARGGPSPLKSNSDSARLPISSGSTSSSRI) are cytoplasmic. A disordered region spans residues 664–687 (SPLKSNSDSARLPISSGSTSSSRI). A compositionally biased stretch (low complexity) spans 678-687 (SSGSTSSSRI).

Belongs to the G-protein coupled receptor 2 family. LN-TM7 subfamily. Heterodimer of 2 chains generated by proteolytic processing; the large extracellular N-terminal fragment (ADGRG1 NT) and the membrane-bound C-terminal fragment (ADGRG1-CT) predominantly remain associated and non-covalently linked. ADGRG1 NT self-associates in a trans-trans manner; the homophilic interaction enhances receptor signaling. Interacts with TGM2. Interacts with heparin; leading to the reduction of ADGRG1 shedding. Interacts with COL3A1. Part of a GPCR-tetraspanin complex at least consisting of ADGRG1, CD81, eventually CD9, and GNA11 in which CD81 is enhancing the association of ADGRG1 with GNA11. Autoproteolytically cleaved into 2 fragments; the large extracellular N-terminal fragment (ADGRG1 NT) and the membrane-bound C-terminal fragment (ADGRG1 CT) predominantly remain associated and non-covalently linked. Shedding to yield the secreted ADGRG1 N-terminal fragment seems to involve metalloprotease(s). Post-translationally, ubiquitinated. Undergoes polyubiquitination upon activation.

Its subcellular location is the cell membrane. The protein localises to the secreted. It localises to the membrane raft. Forms a heterodimer of 2 chains generated by proteolytic processing that remain associated through non-covalent interactions mediated by the GAIN-B domain. In the inactivated receptor, the Stachel sequence (also named stalk) is embedded in the GAIN-B domain, where it adopts a beta-strand conformation. On activation, the Stachel moves into the 7 transmembrane region and adopts a twisted hook-shaped configuration that forms contacts within the receptor, leading to coupling of a G-alpha protein, which activates signaling. The cleaved GAIN-B and N-terminal domains can then dissociate from the rest of the receptor. Adhesion G-protein coupled receptor (aGPCR) for steroid hormone 17alpha-hydroxypregnenolone (17-OH), which is involved in cell adhesion and cell-cell interactions. Ligand binding causes a conformation change that triggers signaling via guanine nucleotide-binding proteins (G proteins) and modulates the activity of downstream effectors, such as RhoA pathway. ADGRG1 is coupled to G(12) and/or G(13) G proteins (GNA12 and GNA13, respectively) and mediates the activation Rho small GTPases. Acts as a potent suppressor of ferroptosis: binding to 17-OH-binding initiates signaling that down-regulates CD36 and alleviates ferroptosis-induced liver injury. Ligand-binding also induces cell adhesion activity via association with proteins such as collagen III/COL3A1 and TGM2. Mediates cell matrix adhesion in developing neurons and hematopoietic stem cells. Involved in cortical development, specifically in maintenance of the pial basement membrane integrity and in cortical lamination: association with COL3A1 in the developing brain inhibits neuronal migration via activation of the RhoA pathway. Together with TGM2, acts as a regulator of myelination and myelin repair in oligodendrocyte precursor cells. Acts as a hemostatic sensor of shear force: G protein-coupled receptor signaling is activated in response to shear force in platelets, promoting G(13) G protein signaling, and platelet shape change and aggregation in a COL3A1-dependent manner. Acts as an inhibitor of VEGFA production thereby inhibiting angiogenesis through a signaling pathway mediated by PRKCA. Plays a role in the maintenance of hematopoietic stem cells in bone marrow niche. Plays an essential role in testis development. This is Adhesion G-protein coupled receptor G1 (ADGRG1) from Pongo pygmaeus (Bornean orangutan).